The primary structure comprises 215 residues: 3-isopropylmalate dehydratase small subunit (215 aa).

Belongs to the LeuD family. LeuD type 1 subfamily. In terms of assembly, heterodimer of LeuC and LeuD.

The enzyme catalyses (2R,3S)-3-isopropylmalate = (2S)-2-isopropylmalate. Its pathway is amino-acid biosynthesis; L-leucine biosynthesis; L-leucine from 3-methyl-2-oxobutanoate: step 2/4. Functionally, catalyzes the isomerization between 2-isopropylmalate and 3-isopropylmalate, via the formation of 2-isopropylmaleate. This Acinetobacter baumannii (strain AB307-0294) protein is 3-isopropylmalate dehydratase small subunit.